The chain runs to 435 residues: MTIKRLTTSTGERIAIVAGLRTPFAKQATAFHGVPAVDLGKIVVNELLQKHDVDPGIIDQLVFGQVVQMPEAPNIAREIVLGTGMNTRTDAYSVSRACATSFQSTVNVAESIMAGHVDVGIAGGADSSSVAPIGVSKKLARTLVDLTKARSLGQRLSLLSRLGLKDLLPVSPAVAEYSTGISMGQTAEQMAKTYQISRQDQDALAHRSHTLATKSWQEGKLAGEVMTVHAEPYKSFIDRDNCFRENSVLESYAKLKPVFDRKHGTVTAATSTPLTDGGAAILLMREGRAKELGYKPLGYIRSFGFAAIDVWQDMLMGPSYATPIALQRAGMNLADLDLIEMHEAFAAQALANMKMFGSTKFAQEQLGRDKAIGDIDMDKFNVMGGSLAYGHPFAATGARLITQTLNELNRRGGGVGLTTACAAGGLGAAMIVETD.

Catalysis depends on C98, which acts as the Acyl-thioester intermediate. Active-site proton acceptor residues include H391 and C421.

This sequence belongs to the thiolase-like superfamily. Thiolase family. As to quaternary structure, heterotetramer of two alpha chains (FadJ) and two beta chains (FadI).

It is found in the cytoplasm. The enzyme catalyses an acyl-CoA + acetyl-CoA = a 3-oxoacyl-CoA + CoA. It participates in lipid metabolism; fatty acid beta-oxidation. In terms of biological role, catalyzes the final step of fatty acid oxidation in which acetyl-CoA is released and the CoA ester of a fatty acid two carbons shorter is formed. This Colwellia psychrerythraea (strain 34H / ATCC BAA-681) (Vibrio psychroerythus) protein is 3-ketoacyl-CoA thiolase.